Here is a 137-residue protein sequence, read N- to C-terminus: uncharacterized protein (137 aa).

A helical transmembrane segment spans residues 20–42 (TVLAFKGEGALALAGLLVMAAVA).

It localises to the host membrane. This is an uncharacterized protein from Dryophytes versicolor (chameleon treefrog).